A 1060-amino-acid chain; its full sequence is Isoleucine--tRNA ligase (1060 aa).

Positions 55-65 match the 'HIGH' region motif; it reads PTANGTPGVHH. Residues 608–612 carry the 'KMSKS' region motif; that stretch reads KMSKH. K611 serves as a coordination point for ATP.

It belongs to the class-I aminoacyl-tRNA synthetase family. IleS type 2 subfamily. Monomer. The cofactor is Zn(2+).

It localises to the cytoplasm. The enzyme catalyses tRNA(Ile) + L-isoleucine + ATP = L-isoleucyl-tRNA(Ile) + AMP + diphosphate. Its function is as follows. Catalyzes the attachment of isoleucine to tRNA(Ile). As IleRS can inadvertently accommodate and process structurally similar amino acids such as valine, to avoid such errors it has two additional distinct tRNA(Ile)-dependent editing activities. One activity is designated as 'pretransfer' editing and involves the hydrolysis of activated Val-AMP. The other activity is designated 'posttransfer' editing and involves deacylation of mischarged Val-tRNA(Ile). This Thermobifida fusca (strain YX) protein is Isoleucine--tRNA ligase.